The primary structure comprises 652 residues: Nitrate reductase-like protein NarX (652 aa).

Residues Met1 to Ser251 are nitrate reductase alpha subunit. The 4Fe-4S Mo/W bis-MGD-type domain occupies Asp53–Thr117. Positions 60, 64, 68, and 103 each coordinate [4Fe-4S] cluster. Asp233 provides a ligand contact to Mo-bis(molybdopterin guanine dinucleotide). The nitrate reductase delta subunit stretch occupies residues Val258–Asp415. 5 helical membrane-spanning segments follow: residues Met416–Gly436, Pro466–Pro486, Ala504–Tyr524, Leu545–Val565, and Ala595–Phe615. Positions Met416–Trp652 are nitrate reductase gamma subunit. 2 residues coordinate heme b: His469 and His479. Residues His602 and His620 each contribute to the heme b site.

This sequence in the N-terminal section; belongs to the nitrate reductase alpha subunit family. It in the central section; belongs to the NarJ/NarW family. The protein in the C-terminal section; belongs to the nitrate reductase gamma subunit family. [4Fe-4S] cluster is required as a cofactor. The cofactor is Mo-bis(molybdopterin guanine dinucleotide). Heme b serves as cofactor.

Its subcellular location is the cell membrane. Does not seem to have nitrate reductase activity. This chain is Nitrate reductase-like protein NarX (narX), found in Mycobacterium tuberculosis (strain CDC 1551 / Oshkosh).